Here is a 276-residue protein sequence, read N- to C-terminus: Transmembrane protein 81 (276 aa).

Positions 1–24 are cleaved as a signal peptide; that stretch reads MKTSATSFIPGSLVLAFCLPVVAT. The Extracellular segment spans residues 25-225; the sequence is SPKTLAIPEK…QHPPWKKKVA (201 aa). Asn-45 carries N-linked (GlcNAc...) asparagine glycosylation. Residues 83–176 enclose the Ig-like domain; the sequence is TNWLCGMLHF…NLRLVKRLYF (94 aa). The cysteines at positions 104 and 160 are disulfide-linked. An N-linked (GlcNAc...) asparagine glycan is attached at Asn-211. Residues 226–246 traverse the membrane as a helical segment; the sequence is IAVGIGVAGGVTGGVLVSIVL. At 247–276 the chain is on the cytoplasmic side; sequence CGRLSVIHSSASLETLQALLPKGGMLRKPD.

In terms of assembly, forms a complex with IZUMO1 and SPACA6 on spermatocyte cell membrane required for fertilization.

The protein localises to the cell membrane. Its function is as follows. Essential fertilization factor required for male fertility. Part of a conserved trimeric sperm complex with the essential fertilization factors IZUMO1 and SPACA6 which bridges sperm and oocyte membranes during fertilization by binding to IZUMO1R/JUNO on the oocyte. In Bos taurus (Bovine), this protein is Transmembrane protein 81 (TMEM81).